The sequence spans 504 residues: Fumitremorgin C monooxygenase (504 aa).

Residues 12–32 (LGVVGASLIVILGIILLFPLG) form a helical membrane-spanning segment. Residue Cys442 coordinates heme.

Belongs to the cytochrome P450 family. Heme is required as a cofactor.

Its subcellular location is the membrane. The catalysed reaction is fumitremorgin C + 2 reduced [NADPH--hemoprotein reductase] + 2 O2 = 12alpha,13alpha-dihydroxyfumitremorgin C + 2 oxidized [NADPH--hemoprotein reductase] + 2 H2O + 2 H(+). It functions in the pathway mycotoxin biosynthesis. Functionally, cytochrome P450 monooxygenase; part of the gene cluster that mediates the biosynthesis of fumitremorgins, indole alkaloids that carry not only intriguing chemical structures, but also interesting biological and pharmacological activities. The biosynthesis of fumitremorgin-type alkaloids begins by condensation of the two amino acids L-tryptophan and L-proline to brevianamide F, catalyzed by the non-ribosomal peptide synthetase ftmA. Brevianamide F is then prenylated by the prenyltransferase ftmPT1/ftmB in the presence of dimethylallyl diphosphate, resulting in the formation of tryprostatin B. The three cytochrome P450 monooxygenases, ftmP450-1/ftmC, ftmP450-2/ftmE and ftmP450-3/FtmG, are responsible for the conversion of tryprostatin B to 6-hydroxytryprostatin B, tryprostatin A to fumitremorgin C and fumitremorgin C to 12,13-dihydroxyfumitremorgin C, respectively. The putative methyltransferase ftmMT/ftmD is expected for the conversion of 6-hydroxytryprostatin B to tryprostatin A. FtmPT2/FtmH catalyzes the prenylation of 12,13-dihydroxyfumitre-morgin C in the presence of dimethylallyl diphosphate, resulting in the formation of fumitremorgin B. Fumitremorgin B is further converted to verruculogen by ftmOx1/ftmF via the insertion of an endoperoxide bond between the two prenyl moieties. In some fungal species, verruculogen is further converted to fumitremorgin A, but the enzymes involved in this step have not been identified yet. The polypeptide is Fumitremorgin C monooxygenase (Aspergillus fumigatus (Neosartorya fumigata)).